The following is a 379-amino-acid chain: Acetylajmalan esterase 1 (379 aa).

The first 20 residues, 1–20 (MGFAPLLVFSLFVFAGTTKG), serve as a signal peptide directing secretion. S34 serves as the catalytic Nucleophile. N-linked (GlcNAc...) asparagine glycosylation is found at N96, N178, N197, and N291. Active-site residues include D332 and H335.

Belongs to the 'GDSL' lipolytic enzyme family. Expressed in roots and leaves at low levels.

It carries out the reaction 17-O-acetylnorajmaline + H2O = norajmaline + acetate + H(+). It catalyses the reaction 17-O-acetylajmaline + H2O = ajmaline + acetate + H(+). It functions in the pathway alkaloid biosynthesis; ajmaline biosynthesis. In terms of biological role, acetylesterase involved in the biosynthesis of ajmaline-type monoterpenoid indole alkaloids (MIAs) natural products, important plant-derived pharmaceuticals used in the therapy of heart disorders. Deacetylates 17-O-acetylnorajmaline to produce norajmaline. May also catalyze the conversion of 17-O-acetylajmaline to ajmaline. The chain is Acetylajmalan esterase 1 from Rauvolfia serpentina (Serpentine wood).